Here is a 198-residue protein sequence, read N- to C-terminus: Glycerol-3-phosphate acyltransferase (198 aa).

Helical transmembrane passes span 5–25 (YLII…SIAI), 55–75 (VGLA…YLGF), 79–99 (GSLG…LPVL), 114–134 (VLLF…LIVV), 139–159 (YVSL…LIYI), and 164–184 (YIGL…RSNI).

This sequence belongs to the PlsY family. As to quaternary structure, probably interacts with PlsX.

It localises to the cell membrane. It carries out the reaction an acyl phosphate + sn-glycerol 3-phosphate = a 1-acyl-sn-glycero-3-phosphate + phosphate. Its pathway is lipid metabolism; phospholipid metabolism. Functionally, catalyzes the transfer of an acyl group from acyl-phosphate (acyl-PO(4)) to glycerol-3-phosphate (G3P) to form lysophosphatidic acid (LPA). This enzyme utilizes acyl-phosphate as fatty acyl donor, but not acyl-CoA or acyl-ACP. The sequence is that of Glycerol-3-phosphate acyltransferase from Finegoldia magna (strain ATCC 29328 / DSM 20472 / WAL 2508) (Peptostreptococcus magnus).